The sequence spans 298 residues: tRNA pseudouridine synthase B (298 aa).

Catalysis depends on Asp-39, which acts as the Nucleophile.

Belongs to the pseudouridine synthase TruB family. Type 1 subfamily.

The catalysed reaction is uridine(55) in tRNA = pseudouridine(55) in tRNA. Functionally, responsible for synthesis of pseudouridine from uracil-55 in the psi GC loop of transfer RNAs. The sequence is that of tRNA pseudouridine synthase B from Oenococcus oeni (strain ATCC BAA-331 / PSU-1).